Consider the following 443-residue polypeptide: Transmembrane protein 184C (443 aa).

7 consecutive transmembrane segments (helical) span residues 15–35 (LVVLLYIVGLIVGVPICIWKL), 46–66 (AWFIAGIFVLMTIPISLWGIL), 84–104 (ILWMVPIYSVDSWIALKYPDI), 182–202 (PVTTVIALICQLTGVYGEGDF), 210–230 (YLVIINNVSQVFAMYCLVLFY), 252–272 (VVFVSFWQAVFIAILVKAGVI), and 284–304 (VATGLQDFIICVEMFLAAVAH). Polar residues predominate over residues 369 to 378 (TSLLSSSTQD). Residues 369 to 422 (TSLLSSSTQDPISAASSIPPSPSGHYQGFGQTITPQTTPTATTMPEELYSADSP) are disordered. Over residues 399-411 (QTITPQTTPTATT) the composition is skewed to low complexity.

It belongs to the TMEM184 family.

It is found in the membrane. In terms of biological role, may play a role in cell growth. In Xenopus tropicalis (Western clawed frog), this protein is Transmembrane protein 184C (tmem184c).